We begin with the raw amino-acid sequence, 413 residues long: Paxillin homolog 1 (413 aa).

Over residues 33 to 45 the composition is skewed to basic and acidic residues; that stretch reads HISDRRSQSRDDF. Residues 33–157 form a disordered region; it reads HISDRRSQSR…PLHSDSMIGT (125 aa). Residues 49–69 are compositionally biased toward polar residues; that stretch reads YDLQGNLNTQSVSNGNITTSP. The span at 73 to 92 shows a compositional bias: basic and acidic residues; the sequence is RSSEGKDYSKSQERIYENES. The segment covering 118-143 has biased composition (polar residues); sequence ASSSRKSLGPPSQAQSYSDVRSNGRS. 4 consecutive LIM zinc-binding domains span residues 174–232, 233–292, 293–350, and 351–410; these read GDCA…NQFS, PKCQ…LFAP, KCNG…ESRG, and SICS…TYAL.

The protein belongs to the paxillin family. Isoform a: Expressed in all 95 body wall muscle cells as well as in the pharyngeal muscle cells (at protein level). Isoform c: Expressed in the body wall muscle cells and in the pharyngeal muscle cells.

It localises to the cell junction. The protein resides in the adherens junction. The protein localises to the cell membrane. Its subcellular location is the cytoplasm. It is found in the myofibril. It localises to the sarcomere. The protein resides in the m line. The protein localises to the cell projection. Its subcellular location is the podosome. Required for myofilament organization of the pharyngeal sarcomeres and for pharyngeal muscle contractions and hence for pharyngeal pumping. Together with lin-8, might be required for myofilament organization in the body wall muscles. This Caenorhabditis elegans protein is Paxillin homolog 1 (pxl-1).